An 861-amino-acid polypeptide reads, in one-letter code: Rod cGMP-specific 3',5'-cyclic phosphodiesterase subunit alpha (861 aa).

N-acetylglycine is present on glycine 2. GAF domains are found at residues 73 to 222 and 254 to 431; these read QAER…NLIM and DIER…GWSV. One can recognise a PDEase domain in the interval 483–816; it reads EEEELAEILQ…KEWKALADEY (334 aa). The active-site Proton donor is the histidine 559. A divalent metal cation is bound by residues histidine 563, histidine 599, aspartate 600, and aspartate 720. Residues 821 to 861 form a disordered region; that stretch reads KALEEEKQKQQTAKQGAAGDQPGGNPSPAGGAPASKSCCIQ. The span at 830 to 861 shows a compositional bias: low complexity; sequence QQTAKQGAAGDQPGGNPSPAGGAPASKSCCIQ. Residue cysteine 858 is modified to Cysteine methyl ester. Cysteine 858 carries the S-farnesyl cysteine lipid modification. A propeptide spans 859–861 (removed in mature form); it reads CIQ.

This sequence belongs to the cyclic nucleotide phosphodiesterase family. In terms of assembly, oligomer composed of two catalytic chains (alpha and beta), an inhibitory chain (gamma) and the delta chain. A divalent metal cation serves as cofactor.

It localises to the cell membrane. Its subcellular location is the cell projection. It is found in the cilium. The protein resides in the photoreceptor outer segment. The enzyme catalyses 3',5'-cyclic GMP + H2O = GMP + H(+). Its function is as follows. Rod-specific cGMP phosphodiesterase that catalyzes the hydrolysis of 3',5'-cyclic GMP. This protein participates in processes of transmission and amplification of the visual signal. This is Rod cGMP-specific 3',5'-cyclic phosphodiesterase subunit alpha from Canis lupus familiaris (Dog).